The following is a 79-amino-acid chain: Protein S100-G (79 aa).

Ser-2 carries the N-acetylserine modification. 2 consecutive EF-hand domains span residues 13 to 48 (IFEK…KGPS) and 45 to 79 (KGPS…KISQ). Positions 26 and 31 each coordinate Ca(2+). Ser-42 is modified (phosphoserine). Asp-58, Asn-60, Asp-62, Glu-64, and Glu-69 together coordinate Ca(2+).

It belongs to the S-100 family.

The sequence is that of Protein S100-G (S100G) from Bos taurus (Bovine).